Reading from the N-terminus, the 432-residue chain is Glutamate-1-semialdehyde 2,1-aminomutase 1 (432 aa).

Residue K272 is modified to N6-(pyridoxal phosphate)lysine.

The protein belongs to the class-III pyridoxal-phosphate-dependent aminotransferase family. HemL subfamily. Homodimer. Pyridoxal 5'-phosphate is required as a cofactor.

The protein resides in the cytoplasm. It catalyses the reaction (S)-4-amino-5-oxopentanoate = 5-aminolevulinate. The protein operates within porphyrin-containing compound metabolism; protoporphyrin-IX biosynthesis; 5-aminolevulinate from L-glutamyl-tRNA(Glu): step 2/2. This chain is Glutamate-1-semialdehyde 2,1-aminomutase 1, found in Exiguobacterium sibiricum (strain DSM 17290 / CCUG 55495 / CIP 109462 / JCM 13490 / 255-15).